Reading from the N-terminus, the 213-residue chain is Methylthioribulose-1-phosphate dehydratase (213 aa).

Residues H104 and H106 each contribute to the Zn(2+) site.

This sequence belongs to the aldolase class II family. MtnB subfamily. Requires Zn(2+) as cofactor.

It carries out the reaction 5-(methylsulfanyl)-D-ribulose 1-phosphate = 5-methylsulfanyl-2,3-dioxopentyl phosphate + H2O. The protein operates within amino-acid biosynthesis; L-methionine biosynthesis via salvage pathway; L-methionine from S-methyl-5-thio-alpha-D-ribose 1-phosphate: step 2/6. In terms of biological role, catalyzes the dehydration of methylthioribulose-1-phosphate (MTRu-1-P) into 2,3-diketo-5-methylthiopentyl-1-phosphate (DK-MTP-1-P). The protein is Methylthioribulose-1-phosphate dehydratase of Stenotrophomonas maltophilia (strain K279a).